Here is an 88-residue protein sequence, read N- to C-terminus: MKKMLIGGIRLYQKYISRFTPATCRFYPTCSAYGIEAIETHGALKGSYLAIRRISKCHPFHKGGLDFVPPKKDKNDDSGHTCKAHHHH.

Residues 65-88 (LDFVPPKKDKNDDSGHTCKAHHHH) form a disordered region. A compositionally biased stretch (basic and acidic residues) spans 69–80 (PPKKDKNDDSGH).

It belongs to the UPF0161 family.

The protein resides in the cell membrane. Could be involved in insertion of integral membrane proteins into the membrane. The sequence is that of Putative membrane protein insertion efficiency factor from Listeria innocua serovar 6a (strain ATCC BAA-680 / CLIP 11262).